The chain runs to 450 residues: Signal recognition particle protein (450 aa).

GTP contacts are provided by residues 107–114 (GLQGVGKT), 190–194 (DTAGR), and 248–251 (TKTD).

It belongs to the GTP-binding SRP family. SRP54 subfamily. As to quaternary structure, part of the signal recognition particle protein translocation system, which is composed of SRP and FtsY. SRP is a ribonucleoprotein composed of Ffh and a 4.5S RNA molecule.

It is found in the cytoplasm. It catalyses the reaction GTP + H2O = GDP + phosphate + H(+). Involved in targeting and insertion of nascent membrane proteins into the cytoplasmic membrane. Binds to the hydrophobic signal sequence of the ribosome-nascent chain (RNC) as it emerges from the ribosomes. The SRP-RNC complex is then targeted to the cytoplasmic membrane where it interacts with the SRP receptor FtsY. Interaction with FtsY leads to the transfer of the RNC complex to the Sec translocase for insertion into the membrane, the hydrolysis of GTP by both Ffh and FtsY, and the dissociation of the SRP-FtsY complex into the individual components. This Buchnera aphidicola subsp. Schizaphis graminum (strain Sg) protein is Signal recognition particle protein.